A 209-amino-acid chain; its full sequence is MICOS complex subunit mic19 (209 aa).

2 coiled-coil regions span residues 48–86 (LELE…DTGS) and 127–156 (EVAA…GRKK).

The protein belongs to the MICOS complex subunit Mic19 family. As to quaternary structure, component of the mitochondrial contact site and cristae organizing system (MICOS) complex.

The protein resides in the mitochondrion inner membrane. Functionally, component of the MICOS complex, a large protein complex of the mitochondrial inner membrane that plays crucial roles in the maintenance of crista junctions, inner membrane architecture, and formation of contact sites to the outer membrane. Involved in osmoadaptation. This is MICOS complex subunit mic19 from Emericella nidulans (strain FGSC A4 / ATCC 38163 / CBS 112.46 / NRRL 194 / M139) (Aspergillus nidulans).